A 413-amino-acid chain; its full sequence is Gamma-glutamyl phosphate reductase (413 aa).

This sequence belongs to the gamma-glutamyl phosphate reductase family.

The protein localises to the cytoplasm. It carries out the reaction L-glutamate 5-semialdehyde + phosphate + NADP(+) = L-glutamyl 5-phosphate + NADPH + H(+). The protein operates within amino-acid biosynthesis; L-proline biosynthesis; L-glutamate 5-semialdehyde from L-glutamate: step 2/2. Its function is as follows. Catalyzes the NADPH-dependent reduction of L-glutamate 5-phosphate into L-glutamate 5-semialdehyde and phosphate. The product spontaneously undergoes cyclization to form 1-pyrroline-5-carboxylate. This chain is Gamma-glutamyl phosphate reductase, found in Alkaliphilus oremlandii (strain OhILAs) (Clostridium oremlandii (strain OhILAs)).